Reading from the N-terminus, the 156-residue chain is Arginine repressor (156 aa).

It belongs to the ArgR family.

The protein localises to the cytoplasm. The protein operates within amino-acid biosynthesis; L-arginine biosynthesis [regulation]. Its function is as follows. Regulates arginine biosynthesis genes. The sequence is that of Arginine repressor from Pectobacterium atrosepticum (strain SCRI 1043 / ATCC BAA-672) (Erwinia carotovora subsp. atroseptica).